A 1203-amino-acid polypeptide reads, in one-letter code: Exonuclease/helicase subunit RexA (1203 aa).

A UvrD-like helicase ATP-binding domain is found at 4 to 472 (VKLTPEQNEA…IRLKENFRSR (469 aa)). ATP is bound at residue 25-32 (ASAGSGKT). The UvrD-like helicase C-terminal domain occupies 503–785 (VQGNISDYPV…RVMTFHKSKG (283 aa)).

This sequence belongs to the helicase family. AddA subfamily. Heterodimer of RexA (AddA) and RexB. The cofactor is Mg(2+).

The catalysed reaction is Couples ATP hydrolysis with the unwinding of duplex DNA by translocating in the 3'-5' direction.. It carries out the reaction ATP + H2O = ADP + phosphate + H(+). In terms of biological role, the heterodimer acts both as an ATP-dependent DNA helicase and an ATP-dependent, dual-direction single-stranded exonuclease. Recognizes the L.lactis chi site (5'-GCGCGTG-3'), which stimulates homologous recombination. The RexA (AddA) nuclease domain is required for chi fragment generation; this subunit has 3'-&gt;5' exonuclease activity and probably also performs the helicase function. This is Exonuclease/helicase subunit RexA from Lactococcus lactis subsp. cremoris (strain MG1363).